The sequence spans 309 residues: Small ribosomal subunit protein uS7m (309 aa).

A disordered region spans residues 39–86 (DSTTSSRLPPRVQIQQQQQQRTQPYSTETTPPPNSNNGDLAGIEGQPP). The span at 51–61 (QIQQQQQQRTQ) shows a compositional bias: low complexity.

The protein belongs to the universal ribosomal protein uS7 family. In terms of assembly, component of the mitochondrial small ribosomal subunit (mt-SSU). Mature N.crassa 74S mitochondrial ribosomes consist of a small (37S) and a large (54S) subunit. The 37S small subunit contains a 16S ribosomal RNA (16S mt-rRNA) and 32 different proteins. The 54S large subunit contains a 23S rRNA (23S mt-rRNA) and 42 different proteins.

The protein resides in the mitochondrion. In terms of biological role, component of the mitochondrial ribosome (mitoribosome), a dedicated translation machinery responsible for the synthesis of mitochondrial genome-encoded proteins, including at least some of the essential transmembrane subunits of the mitochondrial respiratory chain. The mitoribosomes are attached to the mitochondrial inner membrane and translation products are cotranslationally integrated into the membrane. The sequence is that of Small ribosomal subunit protein uS7m (rsm7) from Neurospora crassa (strain ATCC 24698 / 74-OR23-1A / CBS 708.71 / DSM 1257 / FGSC 987).